We begin with the raw amino-acid sequence, 190 residues long: Natural killer cells antigen CD94 (190 aa).

The Cytoplasmic portion of the chain corresponds to 1-10; that stretch reads MAAFRTTAWR. Residues 11–31 form a helical; Signal-anchor for type II membrane protein membrane-spanning segment; the sequence is LISGVLGVICLVLMAALGVLL. The Extracellular portion of the chain corresponds to 32 to 190; sequence KNSLTKRSVQ…FRYICKQQLI (159 aa). 4 disulfides stabilise this stretch: C69-C81, C72-C83, C100-C185, and C163-C177. A C-type lectin domain is found at 79–186; the sequence is YQCNCYFISN…CEKKFRYICK (108 aa). N-linked (GlcNAc...) asparagine glycosylation is found at N104 and N144.

Can form disulfide-bonded heterodimer with NKG2 family members KLRC1 and KLRC2. KLRD1-KLRC1 heterodimer interacts with peptide-bound MHC-E-B2M heterotrimeric complex. KLRD1 plays a prominent role in directly interacting with MHC-E. KLRD1-KLRC1 interacts with much higher affinity with peptide-bound MHC-E-B2M than KLRD1-KLRC2. Interacts with the adapter protein TYROBP/DAP12; this interaction is required for cell surface expression and cell activation.

It is found in the cell membrane. In terms of biological role, immune receptor involved in self-nonself discrimination. In complex with KLRC1 or KLRC2 on cytotoxic and regulatory lymphocyte subsets, recognizes non-classical major histocompatibility (MHC) class Ib molecule MHC-E loaded with self-peptides derived from the signal sequence of classical MHC class Ia and non-classical MHC class Ib molecules. Enables cytotoxic cells to monitor the expression of MHC class I molecules in healthy cells and to tolerate self. Primarily functions as a ligand binding subunit as it lacks the capacity to signal. Its function is as follows. KLRD1-KLRC1 acts as an immune inhibitory receptor. Key inhibitory receptor on natural killer (NK) cells that regulates their activation and effector functions. Dominantly counteracts T cell receptor signaling on a subset of memory/effector CD8-positive T cells as part of an antigen-driven response to avoid autoimmunity. On intraepithelial CD8-positive gamma-delta regulatory T cells triggers TGFB1 secretion, which in turn limits the cytotoxic programming of intraepithelial CD8-positive alpha-beta T cells, distinguishing harmless from pathogenic antigens. In MHC-E-rich tumor microenvironment, acts as an immune inhibitory checkpoint and may contribute to progressive loss of effector functions of NK cells and tumor-specific T cells, a state known as cell exhaustion. Upon MHC-E-peptide binding, transmits intracellular signals through KLRC1 immunoreceptor tyrosine-based inhibition motifs (ITIMs) by recruiting INPP5D/SHIP-1 and INPPL1/SHIP-2 tyrosine phosphatases to ITIMs, and ultimately opposing signals transmitted by activating receptors through dephosphorylation of proximal signaling molecules. Functionally, KLRD1-KLRC2 acts as an immune activating receptor. On cytotoxic lymphocyte subsets recognizes MHC-E loaded with signal sequence-derived peptides from non-classical MHC class Ib MHC-G molecules, likely playing a role in the generation and effector functions of adaptive NK cells and in maternal-fetal tolerance during pregnancy. Regulates the effector functions of terminally differentiated cytotoxic lymphocyte subsets, and in particular may play a role in adaptive NK cell response to viral infection. Upon MHC-E-peptide binding, transmits intracellular signals via the adapter protein TYROBP/DAP12, triggering the phosphorylation of proximal signaling molecules and cell activation. In Bos taurus (Bovine), this protein is Natural killer cells antigen CD94 (KLRD1).